The sequence spans 415 residues: Dynein assembly factor with WD repeat domains 1 (415 aa).

8 WD repeats span residues alanine 90–threonine 129, glycine 132–arginine 174, glycine 175–threonine 214, glycine 217–threonine 256, glycine 259–threonine 298, glycine 301–lysine 340, glycine 343–lysine 384, and histidine 386–arginine 415.

This sequence belongs to the WD repeat WDR69 family.

The protein resides in the cytoplasm. Its subcellular location is the cytoskeleton. It localises to the flagellum basal body. The protein localises to the flagellum axoneme. Required for axonemal dynein assembly and ciliary motility in ciliated organs, including Kupffer's vesicle, during embryogenesis. Facilitates the onset of robust cilia motility during development. This is Dynein assembly factor with WD repeat domains 1 (daw1) from Xenopus laevis (African clawed frog).